A 77-amino-acid chain; its full sequence is Translation initiation factor IF-1, chloroplastic (77 aa).

Residues 1-71 (MKEQKLIHEG…TRGRIIYRLR (71 aa)) enclose the S1-like domain.

The protein belongs to the IF-1 family. As to quaternary structure, component of the 30S ribosomal translation pre-initiation complex which assembles on the 30S ribosome in the order IF-2 and IF-3, IF-1 and N-formylmethionyl-tRNA(fMet); mRNA recruitment can occur at any time during PIC assembly.

It localises to the plastid. It is found in the chloroplast. In terms of biological role, one of the essential components for the initiation of protein synthesis. Stabilizes the binding of IF-2 and IF-3 on the 30S subunit to which N-formylmethionyl-tRNA(fMet) subsequently binds. Helps modulate mRNA selection, yielding the 30S pre-initiation complex (PIC). Upon addition of the 50S ribosomal subunit IF-1, IF-2 and IF-3 are released leaving the mature 70S translation initiation complex. The protein is Translation initiation factor IF-1, chloroplastic of Asarum canadense (Wild ginger).